The primary structure comprises 315 residues: Prephenate dehydratase (315 aa).

The Prephenate dehydratase domain maps to 3-189 (RIAYLGPEGT…ARTRFLLIGV (187 aa)). In terms of domain architecture, ACT spans 203–280 (SAVLRIANVP…ADVRYLGSWP (78 aa)).

As to quaternary structure, homodimer.

The catalysed reaction is prephenate + H(+) = 3-phenylpyruvate + CO2 + H2O. The protein operates within amino-acid biosynthesis; L-phenylalanine biosynthesis; phenylpyruvate from prephenate: step 1/1. The chain is Prephenate dehydratase (pheA) from Mycobacterium ulcerans (strain Agy99).